We begin with the raw amino-acid sequence, 427 residues long: Glutamate-1-semialdehyde 2,1-aminomutase (427 aa).

K265 carries the post-translational modification N6-(pyridoxal phosphate)lysine.

It belongs to the class-III pyridoxal-phosphate-dependent aminotransferase family. HemL subfamily. Homodimer. Pyridoxal 5'-phosphate is required as a cofactor.

Its subcellular location is the cytoplasm. The enzyme catalyses (S)-4-amino-5-oxopentanoate = 5-aminolevulinate. It functions in the pathway porphyrin-containing compound metabolism; protoporphyrin-IX biosynthesis; 5-aminolevulinate from L-glutamyl-tRNA(Glu): step 2/2. The chain is Glutamate-1-semialdehyde 2,1-aminomutase from Pseudomonas savastanoi pv. phaseolicola (strain 1448A / Race 6) (Pseudomonas syringae pv. phaseolicola (strain 1448A / Race 6)).